The primary structure comprises 365 residues: Chorismate synthase (365 aa).

Residue R46 coordinates NADP(+). FMN is bound by residues 123–125 (RSS), 241–242 (NG), G281, 296–300 (KPTPS), and R322.

It belongs to the chorismate synthase family. Homotetramer. FMNH2 serves as cofactor.

It catalyses the reaction 5-O-(1-carboxyvinyl)-3-phosphoshikimate = chorismate + phosphate. Its pathway is metabolic intermediate biosynthesis; chorismate biosynthesis; chorismate from D-erythrose 4-phosphate and phosphoenolpyruvate: step 7/7. In terms of biological role, catalyzes the anti-1,4-elimination of the C-3 phosphate and the C-6 proR hydrogen from 5-enolpyruvylshikimate-3-phosphate (EPSP) to yield chorismate, which is the branch point compound that serves as the starting substrate for the three terminal pathways of aromatic amino acid biosynthesis. This reaction introduces a second double bond into the aromatic ring system. In Helicobacter pylori (strain Shi470), this protein is Chorismate synthase.